The following is a 605-amino-acid chain: Pescadillo homolog (605 aa).

Residues 51–484 are sufficient for interaction with ERB1; sequence KANKGSTAPT…GEEEESESES (434 aa). Position 288 is a phosphoserine (S288). The stretch at 294-342 forms a coiled coil; that stretch reads LKSALNADEANTDETEKEEEQEKKQEKEQEKEQNEETELDTFEDNNKNK. The disordered stretch occupies residues 297 to 342; it reads ALNADEANTDETEKEEEQEKKQEKEQEKEQNEETELDTFEDNNKNK. Residues 303–312 show a composition bias toward acidic residues; it reads ANTDETEKEE. T308 is modified (phosphothreonine). Basic and acidic residues predominate over residues 313–327; the sequence is EQEKKQEKEQEKEQN. The region spanning 355-449 is the BRCT domain; sequence PVASLFSAFV…ELVPANKYLP (95 aa). The segment at 459-605 is disordered; the sequence is PWGDAIGYDP…AKLNKLDSKK (147 aa). The segment covering 473–510 has biased composition (acidic residues); sequence EEGEEEESESESESEDQVEEEDQEVVAGEEDDDDDEEL. The stretch at 530–605 forms a coiled coil; that stretch reads EADKDVNKSK…AKLNKLDSKK (76 aa). Positions 562–571 are enriched in basic residues; it reads KQKKLYKKMK. Basic and acidic residues predominate over residues 575–584; sequence AKKEEQAENL. The span at 585–598 shows a compositional bias: basic residues; the sequence is KKKKKQIAKQKAKL.

Belongs to the pescadillo family. In terms of assembly, component of the NOP7 complex, composed of ERB1, NOP7 and YTM1. The complex is held together by ERB1, which interacts with NOP7 via its N-terminal domain and with YTM1 via a high-affinity interaction between the seven-bladed beta-propeller domains of the 2 proteins. The NOP7 complex associates with the 66S pre-ribosome.

The protein localises to the nucleus. It is found in the nucleolus. It localises to the nucleoplasm. Its function is as follows. Component of the NOP7 complex, which is required for maturation of the 25S and 5.8S ribosomal RNAs and formation of the 60S ribosome. This chain is Pescadillo homolog, found in Saccharomyces cerevisiae (strain YJM789) (Baker's yeast).